Consider the following 585-residue polypeptide: Pheromone-processing carboxypeptidase KEX1 (585 aa).

The signal sequence occupies residues 1–18; sequence MCLLARVRHIEITPDVNG. Residues 19–469 lie on the Lumenal side of the membrane; it reads NMFFWHFQNK…DTARWEAYRK (451 aa). Active-site residues include S135 and D335. N386 and N394 each carry an N-linked (GlcNAc...) asparagine glycan. H397 is a catalytic residue. An N-linked (GlcNAc...) asparagine glycan is attached at N447. The helical transmembrane segment at 470–490 threads the bilayer; it reads SGEIVLVIVAFSAAGWGWWVW. The Cytoplasmic portion of the chain corresponds to 491-585; the sequence is RERKKRRGYM…KGKGKEKMSG (95 aa). The segment at 526–585 is disordered; sequence AADLEAGDFDENELDDLHMRTPTTVMGGEGNDPRYSVGAASEDSEDEEDVKGKGKEKMSG. Residues 530 to 539 show a composition bias toward acidic residues; sequence EAGDFDENEL. A compositionally biased stretch (basic and acidic residues) spans 575–585; sequence VKGKGKEKMSG.

This sequence belongs to the peptidase S10 family.

It localises to the golgi apparatus. It is found in the trans-Golgi network membrane. It catalyses the reaction Preferential release of a C-terminal arginine or lysine residue.. Protease with a carboxypeptidase B-like function involved in the C-terminal processing of the lysine and arginine residues from protein precursors. Promotes cell fusion and is involved in the programmed cell death. This Podospora anserina (strain S / ATCC MYA-4624 / DSM 980 / FGSC 10383) (Pleurage anserina) protein is Pheromone-processing carboxypeptidase KEX1 (KEX1).